The following is a 175-amino-acid chain: Large ribosomal subunit protein uL10 (175 aa).

The protein belongs to the universal ribosomal protein uL10 family. Part of the ribosomal stalk of the 50S ribosomal subunit. The N-terminus interacts with L11 and the large rRNA to form the base of the stalk. The C-terminus forms an elongated spine to which L12 dimers bind in a sequential fashion forming a multimeric L10(L12)X complex.

Forms part of the ribosomal stalk, playing a central role in the interaction of the ribosome with GTP-bound translation factors. This is Large ribosomal subunit protein uL10 from Prochlorococcus marinus (strain NATL1A).